The following is a 321-amino-acid chain: Glucokinase (321 aa).

Glycine 8–threonine 13 is a binding site for ATP.

This sequence belongs to the bacterial glucokinase family.

The protein resides in the cytoplasm. It carries out the reaction D-glucose + ATP = D-glucose 6-phosphate + ADP + H(+). This chain is Glucokinase, found in Shigella dysenteriae serotype 1 (strain Sd197).